The following is a 556-amino-acid chain: Zinc finger protein 18 (556 aa).

Residues 41–123 (RQLFRQFRYQ…TLVESLKGEP (83 aa)) enclose the SCAN box domain. Residues 169-195 (QDLPLQNSSSATGELLSHGVKEESDME) form a disordered region. One can recognise a KRAB domain in the interval 218–291 (ELGTAVLPPL…HLHGAEKMAR (74 aa)). 5 C2H2-type zinc fingers span residues 415 to 437 (PTCR…QRTH), 443 to 465 (FHCH…QRTH), 471 to 493 (CKCD…EKIH), 499 to 521 (YKCP…QRVH), and 527 to 549 (YKCT…QRSH).

This sequence belongs to the krueppel C2H2-type zinc-finger protein family.

It is found in the nucleus. May be involved in transcriptional regulation. The polypeptide is Zinc finger protein 18 (Znf18) (Mus musculus (Mouse)).